Reading from the N-terminus, the 467-residue chain is Membrane-bound acylglycerophosphatidylinositol O-acyltransferase mboat7 (467 aa).

Residues 1–5 (MSPDE) lie on the Cytoplasmic side of the membrane. The helical transmembrane segment at 6–22 (LVYLGILAATIPVGFLF) threads the bilayer. The Lumenal portion of the chain corresponds to 23 to 33 (RYLSPPVKQGA). The helical transmembrane segment at 34–57 (ALLLGLIISIATCGIHTLHSLCTV) threads the bilayer. Residues 58-73 (LGTWIIIKINWRSAPA) lie on the Cytoplasmic side of the membrane. The helical transmembrane segment at 74–93 (LSLAWTFLYLLFFRLVTWFG) threads the bilayer. At 94–193 (LPQPTPFANA…LPGKEPCLQR (100 aa)) the chain is on the lumenal side. Residues 194-211 (LKMVPVYGLLFIAVNSVF) form a helical membrane-spanning segment. Residues 212–230 (PLSYVRTEDFLEHNYFYRF) are Cytoplasmic-facing. A helical membrane pass occupies residues 231-260 (FYMVAIFFVFRMRFYSAWCGAEAGCISAGL). Over 261–421 (GCYPQGALSK…LKASDTISYW (161 aa)) the chain is Lumenal. Residue Asn316 is glycosylated (N-linked (GlcNAc...) asparagine). Residues 422–442 (SSIYFVIHIIAIVCIAVGQFM) traverse the membrane as a helical segment. At 443–467 (KGGRKREKRERGEGEKEDAVREKAE) the chain is on the cytoplasmic side. The disordered stretch occupies residues 447–467 (KREKRERGEGEKEDAVREKAE). Over residues 451–467 (RERGEGEKEDAVREKAE) the composition is skewed to basic and acidic residues.

This sequence belongs to the membrane-bound acyltransferase family.

Its subcellular location is the endoplasmic reticulum membrane. The enzyme catalyses a 1-acyl-sn-glycero-3-phospho-(1D-myo-inositol) + (5Z,8Z,11Z,14Z)-eicosatetraenoyl-CoA = a 1-acyl-2-(5Z,8Z,11Z,14Z-eicosatetraenoyl)-sn-glycero-3-phospho-(1D-myo-inositol) + CoA. It carries out the reaction (5Z,8Z,11Z,14Z)-eicosatetraenoyl-CoA + 1-hexadecanoyl-sn-glycero-3-phosphocholine = 1-hexadecanoyl-2-(5Z,8Z,11Z,14Z-eicosatetraenoyl)-sn-glycero-3-phosphocholine + CoA. The catalysed reaction is a 1-acyl-sn-glycero-3-phospho-(1D-myo-inositol) + an acyl-CoA = a 1,2-diacyl-sn-glycero-3-phospho-(1D-myo-inositol) + CoA. It catalyses the reaction 1-octadecanoyl-sn-glycero-3-phospho-(1D-myo-inositol) + (5Z,8Z,11Z,14Z)-eicosatetraenoyl-CoA = 1-octadecanoyl-2-(5Z,8Z,11Z,14Z-eicosatetraenoyl)-sn-glycero-3-phospho-(1D-myo-inositol) + CoA. Its pathway is lipid metabolism; phospholipid metabolism. In terms of biological role, acyltransferase which catalyzes the transfer of an acyl group from an acyl-CoA to a lysophosphatidylinositol (1-acylglycerophosphatidylinositol or LPI) leading to the production of a phosphatidylinositol (1,2-diacyl-sn-glycero-3-phosphoinositol or PI) and participates in the reacylation step of the phospholipid remodeling pathway also known as the Lands cycle. Prefers arachidonoyl-CoA as the acyl donor, thus contributing to the regulation of free levels arachidonic acid in cell. The protein is Membrane-bound acylglycerophosphatidylinositol O-acyltransferase mboat7 (mboat7) of Danio rerio (Zebrafish).